We begin with the raw amino-acid sequence, 930 residues long: Nonribosomal peptide synthetase acyN (930 aa).

Positions 15 to 436 are adenylation (A) domain; that stretch reads LDPQDNKISV…AGRAKETIIV (422 aa). Residues 567–646 form the Carrier domain; it reads APSNETEATI…GLAGTLETLM (80 aa). At S604 the chain carries O-(pantetheine 4'-phosphoryl)serine. The thioesterase (TE) domain stretch occupies residues 665-914; the sequence is PLWLVHPGVG…HYTMLGPDNI (250 aa).

Belongs to the NRP synthetase family.

The enzyme catalyses 2 3-phenylpyruvate + 2 ATP = polyporic acid + 2 AMP + 2 diphosphate + H(+). Its pathway is secondary metabolite biosynthesis. Hydroxyphenylpyruvate acts more like a competitive inhibitor rather than a substrate. Nonribosomal peptide synthetase that mediates the biosynthesis of polyporic acid via the condensation of 2 phenylpyruvate units. Polyporic acid is further hydroxylaed by the cytochrome P450 monooxygenase MO6277 into less toxic ascocorynin. This Ascocoryne sarcoides (Purple jellydisc fungus) protein is Nonribosomal peptide synthetase acyN.